Consider the following 247-residue polypeptide: 1-(5-phosphoribosyl)-5-[(5-phosphoribosylamino)methylideneamino] imidazole-4-carboxamide isomerase (247 aa).

The Proton acceptor role is filled by D16. D135 acts as the Proton donor in catalysis.

Belongs to the HisA/HisF family.

It localises to the cytoplasm. It carries out the reaction 1-(5-phospho-beta-D-ribosyl)-5-[(5-phospho-beta-D-ribosylamino)methylideneamino]imidazole-4-carboxamide = 5-[(5-phospho-1-deoxy-D-ribulos-1-ylimino)methylamino]-1-(5-phospho-beta-D-ribosyl)imidazole-4-carboxamide. It functions in the pathway amino-acid biosynthesis; L-histidine biosynthesis; L-histidine from 5-phospho-alpha-D-ribose 1-diphosphate: step 4/9. This chain is 1-(5-phosphoribosyl)-5-[(5-phosphoribosylamino)methylideneamino] imidazole-4-carboxamide isomerase, found in Paenarthrobacter aurescens (strain TC1).